Reading from the N-terminus, the 297-residue chain is Transmembrane protein 178A (297 aa).

The signal sequence occupies residues 1 to 25; sequence MEPRALVTALSLGLSLCSLGLLVTA. The Extracellular segment spans residues 26–179; it reads IFTDHWYETD…LLHLRRITAG (154 aa). The segment covering 41–57 has biased composition (basic and acidic residues); that stretch reads ESCERSRAGADPPDQKN. Residues 41 to 84 form a disordered region; it reads ESCERSRAGADPPDQKNRLMPLSHLPLRDSPPLGRRLLPGGPGR. Residues 68–79 are compositionally biased toward low complexity; it reads RDSPPLGRRLLP. Asn-158 carries an N-linked (GlcNAc...) asparagine glycan. A helical membrane pass occupies residues 180-200; the sequence is FLGMAVAVLLCGCIVATVSFF. At 201–208 the chain is on the cytoplasmic side; the sequence is WEESLTQH. The helical transmembrane segment at 209-229 threads the bilayer; it reads VAGLLFLMTGIFCTISLCTYA. At 230–257 the chain is on the extracellular side; that stretch reads ASISYDLNRLPKLIYSLPADVEHGYSWS. Residues 258–278 form a helical membrane-spanning segment; it reads IFCAWCSLGFIVAAGGLCIAY. Residues 279 to 297 are Cytoplasmic-facing; that stretch reads PFISRTKIAQLKSGRDSTV.

It belongs to the TMEM178 family. Interacts with STIM1.

The protein localises to the endoplasmic reticulum membrane. Its function is as follows. Acts as a negative regulator of osteoclast differentiation in basal and inflammatory conditions by regulating TNFSF11-induced Ca (2+) fluxes, thereby controlling the induction of NFATC1. The polypeptide is Transmembrane protein 178A (TMEM178A) (Homo sapiens (Human)).